A 121-amino-acid polypeptide reads, in one-letter code: Small ribosomal subunit protein uS13 (121 aa).

The segment at 94 to 121 (RGLPVRGQSTKNNARTRKGPKRTVGAKR) is disordered. Basic residues predominate over residues 107–121 (ARTRKGPKRTVGAKR).

The protein belongs to the universal ribosomal protein uS13 family. In terms of assembly, part of the 30S ribosomal subunit. Forms a loose heterodimer with protein S19. Forms two bridges to the 50S subunit in the 70S ribosome.

Its function is as follows. Located at the top of the head of the 30S subunit, it contacts several helices of the 16S rRNA. In the 70S ribosome it contacts the 23S rRNA (bridge B1a) and protein L5 of the 50S subunit (bridge B1b), connecting the 2 subunits; these bridges are implicated in subunit movement. Contacts the tRNAs in the A and P-sites. The sequence is that of Small ribosomal subunit protein uS13 from Natranaerobius thermophilus (strain ATCC BAA-1301 / DSM 18059 / JW/NM-WN-LF).